The following is a 124-amino-acid chain: Small ribosomal subunit protein uS12 (124 aa).

The residue at position 89 (D89) is a 3-methylthioaspartic acid. The segment at 103–124 is disordered; it reads DTAGVQNRNRGRSKYGAKRPKK. Over residues 111–124 the composition is skewed to basic residues; sequence NRGRSKYGAKRPKK.

It belongs to the universal ribosomal protein uS12 family. Part of the 30S ribosomal subunit. Contacts proteins S8 and S17. May interact with IF1 in the 30S initiation complex.

With S4 and S5 plays an important role in translational accuracy. In terms of biological role, interacts with and stabilizes bases of the 16S rRNA that are involved in tRNA selection in the A site and with the mRNA backbone. Located at the interface of the 30S and 50S subunits, it traverses the body of the 30S subunit contacting proteins on the other side and probably holding the rRNA structure together. The combined cluster of proteins S8, S12 and S17 appears to hold together the shoulder and platform of the 30S subunit. The protein is Small ribosomal subunit protein uS12 of Desulforudis audaxviator (strain MP104C).